The following is a 247-amino-acid chain: MRYRAVVEYDGTAFIGWQRQKGVAGRSVQESIEDAIYRLSQQCVTVFAAGRTDAGVHALGQVVHFDLNTSLQDYVIKNALNHYLRSDMVSILSLEEAAEGFHARFSAKKRHYMYKIVNRDAPPCLDRLRMWHVPKQLNVSDMQEAASHMVGEKKDFASFRAKECQSKSSVRTVDRIDCVREGNNIFVHVSAKSFLHKQVRIIVGTLVQCGHGAFPPSYVLEILERKNRAAAGITAPPHGLYLVLVEY.

The active-site Nucleophile is the Asp-53. Tyr-112 contributes to the substrate binding site.

Belongs to the tRNA pseudouridine synthase TruA family. As to quaternary structure, homodimer.

It carries out the reaction uridine(38/39/40) in tRNA = pseudouridine(38/39/40) in tRNA. Its function is as follows. Formation of pseudouridine at positions 38, 39 and 40 in the anticodon stem and loop of transfer RNAs. The polypeptide is tRNA pseudouridine synthase A (Anaplasma marginale (strain St. Maries)).